A 1398-amino-acid chain; its full sequence is Disease resistance protein RPV1 (1398 aa).

The region spanning 22–185 (TTYDVFLSFR…EITNSIFRQL (164 aa)) is the TIR domain. NAD(+)-binding positions include 31 to 36 (RGEDTR) and glycine 63. Glutamate 97 is a catalytic residue. Positions 201–440 (SHVKEMILRL…KRSYDGLDRI (240 aa)) constitute an NB-ARC domain. LRR repeat units follow at residues 203 to 225 (VKEMILRLHLESSDVRMVGIYGV), 423 to 447 (KADIHKVLKRSYDGLDRIDKNIFLD), 478 to 504 (LNDLCLITLPYNQICMHDLIQQMGWEI), 535 to 560 (IKSVETMSLDLSKLKRVCSNSNVFAK), 610 to 632 (SYELRYLRWDGYPLDSLPLNFDG), 633 to 657 (GKLVELHLKCSNIKQLWQGHKDLER), 678 to 702 (MPNLERLCLSGCVSLIDIHPSVGNM), 703 to 726 (KKLTTLSLRSCNKLKNLPDSIGDL), 728 to 750 (SLESLYLSNCSKFEKFPEKGGNM), 751 to 773 (KSLTELDLKNTAIKDLPDSIGDL), 775 to 797 (SLESLYLSNCSKFEKFPEKGGNM), 798 to 820 (KSLTELDLKNTAIKDLPDSIGDL), 822 to 844 (SLEILNLSDCAKFEKFPEKGGNM), 845 to 867 (KSLKELDLQNTAIKDLPDSIGDL), 869 to 891 (SLKYLSLSDCSKFEKFPEKGGNM), 892 to 914 (KRLLQLILSNTAIKDLPDSIGDL), 916 to 938 (SLKYLYLSDCSKFEKFPEKGGNM), 939 to 961 (KSLTELDLKNTAIKDLPDSIGDL), 963 to 985 (SLEILNLSDCAKFEKFPEKGGNM), 986 to 1008 (KSLKELDLQNTAIKDLPDSIGDL), 1010 to 1032 (SLKYLYLSDCSKFEKFPEKGGNM), 1033 to 1055 (KSLLQLILSNTAIKDLPDSIGDL), 1079 to 1102 (MKSLRELGLRNTAIKDLPDSIGDL), and 1105 to 1128 (LEMLSLSNCPKFEVLPLSLKAIDA). A compositionally biased stretch (polar residues) spans 1315-1328 (QNSGDNGSALQDAN). The segment at 1315–1336 (QNSGDNGSALQDANGNVHGANQ) is disordered. The stretch at 1346-1369 (LDLLRNLSLGDNGSVVLEDTLGNR) is one LRR 25 repeat. The Nuclear localization signal motif lies at 1369–1373 (RKRRR).

It belongs to the disease resistance TIR-NB-LRR family. Homodimer; homodimerization is required for NAD(+) hydrolase (NADase) activity.

It localises to the nucleus. It is found in the cytoplasm. The enzyme catalyses NAD(+) + H2O = ADP-D-ribose + nicotinamide + H(+). Its function is as follows. Disease resistance (R) protein that confers resistance to multiple powdery and downy mildew by promoting cell death. Acts as a NAD(+) hydrolase (NADase): in response to activation, catalyzes cleavage of NAD(+) into ADP-D-ribose (ADPR) and nicotinamide; NAD(+) cleavage triggering a defense system that promotes cell death. This Vitis rotundifolia (Muscadine grape) protein is Disease resistance protein RPV1.